A 120-amino-acid chain; its full sequence is MIF-like protein mif-2 (120 aa).

This sequence belongs to the MIF family.

The protein is MIF-like protein mif-2 (mif-2) of Caenorhabditis elegans.